The sequence spans 241 residues: uncharacterized protein (241 aa).

The HTH luxR-type domain occupies 147 to 212; it reads FSYRSVILTL…EMYAWINSAQ (66 aa).

This is an uncharacterized protein from Escherichia coli O157:H7.